We begin with the raw amino-acid sequence, 250 residues long: 2,3-bisphosphoglycerate-dependent phosphoglycerate mutase (250 aa).

Substrate contacts are provided by residues 10 to 17 (RHGESQWN), 23 to 24 (TG), R62, 89 to 92 (ERHY), K100, 116 to 117 (RR), and 185 to 186 (GN). H11 acts as the Tele-phosphohistidine intermediate in catalysis. Residue E89 is the Proton donor/acceptor of the active site.

Belongs to the phosphoglycerate mutase family. BPG-dependent PGAM subfamily. In terms of assembly, homodimer.

It catalyses the reaction (2R)-2-phosphoglycerate = (2R)-3-phosphoglycerate. The protein operates within carbohydrate degradation; glycolysis; pyruvate from D-glyceraldehyde 3-phosphate: step 3/5. Its function is as follows. Catalyzes the interconversion of 2-phosphoglycerate and 3-phosphoglycerate. This is 2,3-bisphosphoglycerate-dependent phosphoglycerate mutase from Yersinia pseudotuberculosis serotype IB (strain PB1/+).